The sequence spans 652 residues: DNA ligase (652 aa).

Residues 29–33, 78–79, and E107 contribute to the NAD(+) site; these read DSEYD and SL. K109 acts as the N6-AMP-lysine intermediate in catalysis. The NAD(+) site is built by R130, E164, K278, and K302. The Zn(2+) site is built by C395, C398, C413, and C418. Positions 577-652 constitute a BRCT domain; that stretch reads DQQAALFGLT…IEDEDWLLNL (76 aa).

This sequence belongs to the NAD-dependent DNA ligase family. LigA subfamily. It depends on Mg(2+) as a cofactor. Mn(2+) serves as cofactor.

The enzyme catalyses NAD(+) + (deoxyribonucleotide)n-3'-hydroxyl + 5'-phospho-(deoxyribonucleotide)m = (deoxyribonucleotide)n+m + AMP + beta-nicotinamide D-nucleotide.. In terms of biological role, DNA ligase that catalyzes the formation of phosphodiester linkages between 5'-phosphoryl and 3'-hydroxyl groups in double-stranded DNA using NAD as a coenzyme and as the energy source for the reaction. It is essential for DNA replication and repair of damaged DNA. The polypeptide is DNA ligase (Streptococcus equi subsp. equi (strain 4047)).